Reading from the N-terminus, the 454-residue chain is MINQDTIAAQATAPGRGGVGIIRVSGSLAKSVAEKVVGKIPKVRYADYVPFKSLAGEQLDQGIAIYFAGPNSFTGEDVLELQGHGGPVVLDMLLKEISKIEGVRLAKPGEFSERAFMNDKLDLTQAEAIADLINATSEQAAKSALQSLQGEFSKHIETLVEKVIHLRMYVEAAIDFPDEEIDFLSDGKVSGDLDAIIAQLNTVTDQAKQGSIMREGMRVVIAGRPNAGKSSLLNALAGREAAIVTEIAGTTRDVLREHIHIDGMPLHIIDTAGLRESPDLVEQIGIERAWDEINQADRVLFMLDGTDTIDTDPHKIWPEFMAKLPVGLGVTVIRNKADLSGDVVGMDQNQQYPVISLSAKNADGIELVREHLKACIGFDGATEGGFMARRRHLDALEHAAYHLDTGKAQLEMHIAGEILAEELRLTQQYLNEITGEFTSDDLLGKIFSSFCIGK.

(6S)-5-formyl-5,6,7,8-tetrahydrofolate contacts are provided by R23, E80, and K120. A TrmE-type G domain is found at 216–377 (GMRVVIAGRP…VREHLKACIG (162 aa)). N226 is a binding site for K(+). GTP contacts are provided by residues 226 to 231 (NAGKSS), 245 to 251 (TEIAGTT), 270 to 273 (DTAG), and 335 to 338 (NKAD). S230 provides a ligand contact to Mg(2+). Residues T245, I247, and T250 each coordinate K(+). T251 is a binding site for Mg(2+). K454 provides a ligand contact to (6S)-5-formyl-5,6,7,8-tetrahydrofolate.

It belongs to the TRAFAC class TrmE-Era-EngA-EngB-Septin-like GTPase superfamily. TrmE GTPase family. Homodimer. Heterotetramer of two MnmE and two MnmG subunits. It depends on K(+) as a cofactor.

The protein resides in the cytoplasm. Functionally, exhibits a very high intrinsic GTPase hydrolysis rate. Involved in the addition of a carboxymethylaminomethyl (cmnm) group at the wobble position (U34) of certain tRNAs, forming tRNA-cmnm(5)s(2)U34. This chain is tRNA modification GTPase MnmE, found in Pseudoalteromonas translucida (strain TAC 125).